A 132-amino-acid polypeptide reads, in one-letter code: Small ribosomal subunit protein uS9 (132 aa).

This sequence belongs to the universal ribosomal protein uS9 family.

The chain is Small ribosomal subunit protein uS9 from Methanothrix thermoacetophila (strain DSM 6194 / JCM 14653 / NBRC 101360 / PT) (Methanosaeta thermophila).